The sequence spans 901 residues: HTH-type transcriptional regulator MalT (901 aa).

39 to 46 provides a ligand contact to ATP; that stretch reads SPAGYGKT. An HTH luxR-type domain is found at 829–894; it reads ELIRTSPLTQ…DAVQHAQQLL (66 aa). Positions 853 to 872 form a DNA-binding region, H-T-H motif; sequence NEQIAGELEVAATTIKTHIR.

Belongs to the MalT family. In terms of assembly, monomer in solution. Oligomerizes to an active state in the presence of the positive effectors ATP and maltotriose.

Its activity is regulated as follows. Activated by ATP and maltotriose, which are both required for DNA binding. In terms of biological role, positively regulates the transcription of the maltose regulon whose gene products are responsible for uptake and catabolism of malto-oligosaccharides. Specifically binds to the promoter region of its target genes, recognizing a short DNA motif called the MalT box. This chain is HTH-type transcriptional regulator MalT, found in Escherichia fergusonii (strain ATCC 35469 / DSM 13698 / CCUG 18766 / IAM 14443 / JCM 21226 / LMG 7866 / NBRC 102419 / NCTC 12128 / CDC 0568-73).